We begin with the raw amino-acid sequence, 690 residues long: Molting protein mlt-10 (690 aa).

Positions 1 to 18 are cleaved as a signal peptide; it reads MRNLNLILFTALAAVTYA. 2 N-linked (GlcNAc...) asparagine glycosylation sites follow: asparagine 42 and asparagine 204. Residues 219–285 are a coiled coil; sequence IKKLGEEAKR…MRKKEADEIR (67 aa). Asparagine 305 and asparagine 415 each carry an N-linked (GlcNAc...) asparagine glycan. Helical transmembrane passes span 514-534, 544-564, 579-599, 618-638, and 643-663; these read PFIL…FIVL, LSPA…PLIL, FSPI…PGVF, VFTP…TPMV, and ILSP…FAVV.

Belongs to the mlt-10-like family. Expressed in the major body hypodermal syncytium (Hyp7), the dorsal and ventral ridges of the hypodermis, hypodermal cells in the head and tail, and the pharyngeal myoepithelium, but not the lateral seam cells.

Its subcellular location is the membrane. The protein resides in the secreted. Functionally, required for the efficient removal of larval cuticles during the molting cycle as well as the synthesis of new cuticles. The chain is Molting protein mlt-10 from Caenorhabditis elegans.